The chain runs to 239 residues: Ribosomal RNA small subunit methyltransferase G (239 aa).

Residues glycine 76, phenylalanine 81, 99–101 (DSS), 128–129 (IE), and arginine 147 each bind S-adenosyl-L-methionine.

This sequence belongs to the methyltransferase superfamily. RNA methyltransferase RsmG family.

The protein localises to the cytoplasm. Functionally, specifically methylates the N7 position of a guanine in 16S rRNA. The sequence is that of Ribosomal RNA small subunit methyltransferase G from Prochlorococcus marinus (strain MIT 9515).